A 237-amino-acid chain; its full sequence is Ribonuclease PH (237 aa).

Residues Arg86 and 124–126 (GTR) contribute to the phosphate site.

This sequence belongs to the RNase PH family. Homohexameric ring arranged as a trimer of dimers.

It catalyses the reaction tRNA(n+1) + phosphate = tRNA(n) + a ribonucleoside 5'-diphosphate. Phosphorolytic 3'-5' exoribonuclease that plays an important role in tRNA 3'-end maturation. Removes nucleotide residues following the 3'-CCA terminus of tRNAs; can also add nucleotides to the ends of RNA molecules by using nucleoside diphosphates as substrates, but this may not be physiologically important. Probably plays a role in initiation of 16S rRNA degradation (leading to ribosome degradation) during starvation. The protein is Ribonuclease PH of Rhodopseudomonas palustris (strain HaA2).